The following is a 145-amino-acid chain: Large ribosomal subunit protein uL13 (145 aa).

It belongs to the universal ribosomal protein uL13 family. In terms of assembly, part of the 50S ribosomal subunit.

In terms of biological role, this protein is one of the early assembly proteins of the 50S ribosomal subunit, although it is not seen to bind rRNA by itself. It is important during the early stages of 50S assembly. This chain is Large ribosomal subunit protein uL13, found in Listeria innocua serovar 6a (strain ATCC BAA-680 / CLIP 11262).